The primary structure comprises 302 residues: Pseudouridine-5'-phosphate glycosidase (302 aa).

Glu25 serves as the catalytic Proton donor. Residues Lys86 and Val106 each contribute to the substrate site. Asp138 provides a ligand contact to Mn(2+). Residue 140–142 participates in substrate binding; that stretch reads SAD. Lys159 functions as the Nucleophile in the catalytic mechanism.

Belongs to the pseudouridine-5'-phosphate glycosidase family. In terms of assembly, homotrimer. Mn(2+) serves as cofactor.

It carries out the reaction D-ribose 5-phosphate + uracil = psi-UMP + H2O. Catalyzes the reversible cleavage of pseudouridine 5'-phosphate (PsiMP) to ribose 5-phosphate and uracil. Functions biologically in the cleavage direction, as part of a pseudouridine degradation pathway. The protein is Pseudouridine-5'-phosphate glycosidase of Jannaschia sp. (strain CCS1).